The sequence spans 409 residues: DEP domain-containing mTOR-interacting protein (409 aa).

Position 1 is an N-acetylmethionine (M1). The tract at residues 1–25 (MEEGGSTGSAGSDSSTSGSGGAQQR) is disordered. 2 DEP domains span residues 36–119 (TGEQ…RFRK) and 145–219 (SPEN…QFRM). The short motif at 217-235 (FRMNFRRRRRLMELLNEKS) is the DDEX motif element. Phosphoserine; by MAPK3 is present on S235. Position 241 is a phosphothreonine (T241). Phosphoserine occurs at positions 244 and 258. T259 bears the Phosphothreonine mark. A phosphoserine mark is found at S263, S265, S280, S282, and S283. A phosphoserine; by CK1 mark is found at S286 and S287. A BetaTrCP degron motif motif is present at residues 286-291 (SSGYFS). Y289 carries the phosphotyrosine; by SYK modification. A Phosphoserine; by CK1 modification is found at S291. At S293 the chain carries Phosphoserine; by MTOR. The residue at position 295 (T295) is a Phosphothreonine; by MTOR. A phosphoserine mark is found at S297 and S298. Phosphoserine; by MTOR is present on S299. A PDZ domain is found at 330 to 407 (TFTIVGDAVG…TIVMEVMEEL (78 aa)).

Associated component of the mechanistic target of rapamycin complex 1 (mTORC1) which contains MTOR, MLST8 and RPTOR. Associated component of the mechanistic target of rapamycin complex 2 (mTORC2) which contains MTOR, MLST8, PROTOR1, RICTOR, MAPKAP1 and DEPTOR. Interacts (via PDZ domain) with MTOR; interacts with MTOR within both mTORC1 and mTORC2. Interacts (via PDZ domain) with MINAR1 (via N-terminus). Interacts with SIK3. Post-translationally, phosphorylation weakens interaction with MTOR within mTORC1 and mTORC2. Phosphorylated at Ser-286, Ser-287 and Ser-291 in response to mitogenic stimulation by MTOR: DEPTOR is either directly phosphorylated by MTOR or indirectly via proteins kinases that are activated by MTOR, such as CK1/CSNK1A1. Phosphorylation at Ser-286, Ser-287 and Ser-291 promotes ubiquitination by the SCF(BTRC) complex, followed by degradation. Phosphorylation at Ser-235 by MAPK3/ERK1 promotes deubiquitination by USP7, enhancing its stability. Phosphorylation at Tyr-289 by SYK impairs its interaction with MTOR, promoting mTORC1 and mTORC2 signaling. Ubiquitinated; leading to proteasomal degradation. Ubiquitination by the SCF(BTRC) and SCF(FBXW11) complexes following phosphorylation at Ser-286, Ser-287 and Ser-291 by MTOR, leads to its degradation by the proteasome. Deubiquitinated by OTUB1 in response to amino acid via a non-canonical mechanism, leading to DEPTOR stability. Deubiquitinated by USP7 following phosphorylation at Ser-235, promoting its stability.

It localises to the lysosome membrane. Its activity is regulated as follows. Inhibited upon phosphatidic acid-binding: phosphatidic acid produced upon mitogenic stimulation promotes DEPTOR dissociatiom from the mTORC1 and mTORC2 complexes, leading to their activation. Specifically binds unsaturated phosphatidic acid, such as 16:0-18:1, 18:0-18:1 and di-18:1. Inhibited when nutrients are present via a feedback loop: phosphorylation by MTOR promotes DEPTOR ubiquitination and degradation. Negative regulator of the mTORC1 and mTORC2 complexes: inhibits the protein kinase activity of MTOR, thereby inactivating both complexes. DEPTOR inhibits mTORC1 and mTORC2 to induce autophagy. In contrast to AKT1S1/PRAS40, only partially inhibits mTORC1 activity. This is DEP domain-containing mTOR-interacting protein from Homo sapiens (Human).